Consider the following 212-residue polypeptide: Ion-translocating oxidoreductase complex subunit G (212 aa).

A helical transmembrane segment spans residues 9–29 (GLLLALFALLCTGLVAVVNQQ). Threonine 176 is modified (FMN phosphoryl threonine).

It belongs to the RnfG family. The complex is composed of six subunits: RnfA, RnfB, RnfC, RnfD, RnfE and RnfG. It depends on FMN as a cofactor.

The protein localises to the cell inner membrane. In terms of biological role, part of a membrane-bound complex that couples electron transfer with translocation of ions across the membrane. This chain is Ion-translocating oxidoreductase complex subunit G, found in Shewanella oneidensis (strain ATCC 700550 / JCM 31522 / CIP 106686 / LMG 19005 / NCIMB 14063 / MR-1).